We begin with the raw amino-acid sequence, 110 residues long: UPF0060 membrane protein Bpet0062 (110 aa).

4 helical membrane passes run 7–27 (LGLF…PYLW), 33–53 (SAWL…LLTL), 63–83 (AAYG…VDGV), and 86–106 (ATTD…IMAG).

This sequence belongs to the UPF0060 family.

Its subcellular location is the cell inner membrane. The sequence is that of UPF0060 membrane protein Bpet0062 from Bordetella petrii (strain ATCC BAA-461 / DSM 12804 / CCUG 43448).